A 465-amino-acid chain; its full sequence is Ribulose bisphosphate carboxylase large chain (465 aa).

Lysine 4 is subject to N6,N6,N6-trimethyllysine. Positions 113 and 163 each coordinate substrate. Residue lysine 165 is the Proton acceptor of the active site. Lysine 167 contributes to the substrate binding site. 3 residues coordinate Mg(2+): lysine 191, aspartate 193, and glutamate 194. Residue lysine 191 is modified to N6-carboxylysine. Histidine 284 functions as the Proton acceptor in the catalytic mechanism. Substrate is bound by residues arginine 285, histidine 317, and serine 369.

This sequence belongs to the RuBisCO large chain family. Type I subfamily. In terms of assembly, heterohexadecamer of 8 large chains and 8 small chains; disulfide-linked. The disulfide link is formed within the large subunit homodimers. Requires Mg(2+) as cofactor. The disulfide bond which can form in the large chain dimeric partners within the hexadecamer appears to be associated with oxidative stress and protein turnover.

Its subcellular location is the plastid. It is found in the chloroplast. The enzyme catalyses 2 (2R)-3-phosphoglycerate + 2 H(+) = D-ribulose 1,5-bisphosphate + CO2 + H2O. It catalyses the reaction D-ribulose 1,5-bisphosphate + O2 = 2-phosphoglycolate + (2R)-3-phosphoglycerate + 2 H(+). Functionally, ruBisCO catalyzes two reactions: the carboxylation of D-ribulose 1,5-bisphosphate, the primary event in carbon dioxide fixation, as well as the oxidative fragmentation of the pentose substrate in the photorespiration process. Both reactions occur simultaneously and in competition at the same active site. This chain is Ribulose bisphosphate carboxylase large chain, found in Ulmus alata (Winged elm).